The sequence spans 312 residues: Acetyl-coenzyme A carboxylase carboxyl transferase subunit alpha (312 aa).

The 255-residue stretch at 32 to 286 (LLEERLARLR…KEALLKALEE (255 aa)) folds into the CoA carboxyltransferase C-terminal domain.

It belongs to the AccA family. As to quaternary structure, acetyl-CoA carboxylase is a heterohexamer composed of biotin carboxyl carrier protein (AccB), biotin carboxylase (AccC) and two subunits each of ACCase subunit alpha (AccA) and ACCase subunit beta (AccD).

The protein resides in the cytoplasm. It carries out the reaction N(6)-carboxybiotinyl-L-lysyl-[protein] + acetyl-CoA = N(6)-biotinyl-L-lysyl-[protein] + malonyl-CoA. It participates in lipid metabolism; malonyl-CoA biosynthesis; malonyl-CoA from acetyl-CoA: step 1/1. Component of the acetyl coenzyme A carboxylase (ACC) complex. First, biotin carboxylase catalyzes the carboxylation of biotin on its carrier protein (BCCP) and then the CO(2) group is transferred by the carboxyltransferase to acetyl-CoA to form malonyl-CoA. The sequence is that of Acetyl-coenzyme A carboxylase carboxyl transferase subunit alpha from Thermus thermophilus (strain ATCC BAA-163 / DSM 7039 / HB27).